A 199-amino-acid chain; its full sequence is MTKVKICGLSTKEAVETAVSAGADYIGFVFAPSKRQVTLEEAAELAKLIPADVKKVGVFVSPSRVELLEAIDKVGLDLVQVHGQVADDLFENLPCASIQAVQVDGNGHVPNSQADYLLFDAPVAGSGQPFDWGQLDTTGLAQPFFIAGGLNEDNVVKAIQHFTPYAVDVSSGVETDGQKDHEKIRRFIERVKHGISGTK.

This sequence belongs to the TrpF family.

The catalysed reaction is N-(5-phospho-beta-D-ribosyl)anthranilate = 1-(2-carboxyphenylamino)-1-deoxy-D-ribulose 5-phosphate. Its pathway is amino-acid biosynthesis; L-tryptophan biosynthesis; L-tryptophan from chorismate: step 3/5. This Streptococcus pneumoniae serotype 4 (strain ATCC BAA-334 / TIGR4) protein is N-(5'-phosphoribosyl)anthranilate isomerase.